The sequence spans 186 residues: Translation initiation factor IF-3 (186 aa).

The segment at 1–21 (MINRSSGKDRDRSRSGDKELR) is disordered.

It belongs to the IF-3 family. In terms of assembly, monomer.

It localises to the cytoplasm. Functionally, IF-3 binds to the 30S ribosomal subunit and shifts the equilibrium between 70S ribosomes and their 50S and 30S subunits in favor of the free subunits, thus enhancing the availability of 30S subunits on which protein synthesis initiation begins. The chain is Translation initiation factor IF-3 from Borrelia turicatae (strain 91E135).